The sequence spans 902 residues: HRVYVEMRFTVRDCSSLPNVPGSCKETFNLYYYETDSNIDNKISTFWNESPYLKVDTIAADESFSQVDFGGRLMKVNTEVRSFGPLTRSGFYLAFQDYGACMSLLSVRVFFKKCPSVVQNFAVFPETMTGAESTSLVIARGTCIPNAEEVDVPIKLYCNGDGEWMVPIGKCTCKAGYEPENHVVCKACPAAMFKANQGMGICAQCPANSRSTSEASPICICRNGYYRADFDTPEAPCTSVPSGPRNVISIVNETAITLEWHPPRETGGRDDVNYNIICKKCQSDRRGCSHCDDNVDFVPRQLGLTDTRVFISNLWVHTPYTFEIQAVNGVTNKSPFPPQHVSVNITTNQAAPSSVPIMHQVKATMKSITLSWPQPEQPNGIILDYEIRYYEKDHHEFNSSLARSQTNTASIEGLRPGVVYVVQVRARTVAGYGKFSSKMCFQTLTEEDYKSELREQLPLIAGSAAAGVVFIVSLVAISIVCSRKRTYSKEAVYSDKLQHYSTGRGSPGMKIYIDPFTYEDPNEAVREFAKEIDVSFVKIEEVIGAGEFGEVYKGRLKLPSKREISVAIKTLKAGYSEKQRRDFLSEASIMGQFDHPNIIRLEGVVTKSRPVMIITEFMENGALDSFLRQNDGQFTVIQLVGMLRGIAAGMKYLSEMNYVHRDLAARNILVNSNLVCKVSDFGLSRYLQDDTSDPTYTSSLGGKIPVRWTAPEAIRYRKFTSASDVWSYGIVMWEVMSYGERPYWDMSNQDVINAIEQDYRLPPPMDCPAALHQLMLDCWQKDRNSRPRFGEIVNTLDKMIRNPASLKTVATIPAVPSQPLLDRSIPDISAFTSVDDWLSAIKMGQYRDNFLSSGFTSLHVVAQMTSEDLLRIGITLAGHQKKILNSIQSMRVQISQSPTSIA.

The Eph LBD domain occupies 1–119; that stretch reads HRVYVEMRFT…FFKKCPSVVQ (119 aa). The Extracellular segment spans residues 1–459; it reads HRVYVEMRFT…KSELREQLPL (459 aa). Fibronectin type-III domains are found at residues 240–350 and 351–448; these read VPSG…TNQA and APSS…TEED. N-linked (GlcNAc...) asparagine glycans are attached at residues asparagine 252, asparagine 344, and asparagine 398. A helical membrane pass occupies residues 460–480; it reads IAGSAAAGVVFIVSLVAISIV. Residues 481-902 lie on the Cytoplasmic side of the membrane; it reads CSRKRTYSKE…QISQSPTSIA (422 aa). The region spanning 537–800 is the Protein kinase domain; the sequence is VKIEEVIGAG…EIVNTLDKMI (264 aa). ATP-binding positions include 543–551 and lysine 569; that span reads IGAGEFGEV. Residue aspartate 662 is the Proton acceptor of the active site. An SAM domain is found at 829–893; the sequence is SAFTSVDDWL…LNSIQSMRVQ (65 aa). Positions 900-902 match the PDZ-binding motif; sequence SIA.

Belongs to the protein kinase superfamily. Tyr protein kinase family. Ephrin receptor subfamily. As to quaternary structure, heterotetramer upon binding of the ligand. The heterotetramer is composed of an ephrin dimer and a receptor dimer. Oligomerization is probably required to induce biological responses. Phosphorylated. Autophosphorylation is stimulated by ligands. Expressed in the embryo in the brain and spinal cord and in the first and fourth visceral arches. Most abundant in adult brain, with lower levels in eye, heart, ovary, oviduct, lung and pharynx.

It is found in the cell membrane. The protein resides in the early endosome membrane. It localises to the cell projection. Its subcellular location is the dendrite. The enzyme catalyses L-tyrosyl-[protein] + ATP = O-phospho-L-tyrosyl-[protein] + ADP + H(+). In terms of biological role, receptor tyrosine kinase which binds promiscuously transmembrane ephrin-B family ligands residing on adjacent cells, leading to contact-dependent bidirectional signaling into neighboring cells. The signaling pathway downstream of the receptor is referred to as forward signaling while the signaling pathway downstream of the ephrin ligand is referred to as reverse signaling. May play a role in axon guidance during nervous system development. May also play an important redundant role with other ephrin-B receptors in development and maturation of dendritic spines and synapse formation. More generally, may play a role in targeted cell migration and adhesion. Upon activation by ephrin-B ligands activates the MAPK/ERK and the JNK signaling cascades to regulate cell migration and adhesion respectively. The protein is Ephrin type-B receptor 1-B (ephb1-b) of Xenopus laevis (African clawed frog).